The following is a 260-amino-acid chain: Trans-aconitate 2-methyltransferase (260 aa).

This sequence belongs to the methyltransferase superfamily. Tam family.

The protein resides in the cytoplasm. It carries out the reaction trans-aconitate + S-adenosyl-L-methionine = (E)-3-(methoxycarbonyl)pent-2-enedioate + S-adenosyl-L-homocysteine. Functionally, catalyzes the S-adenosylmethionine monomethyl esterification of trans-aconitate. This Methylobacterium radiotolerans (strain ATCC 27329 / DSM 1819 / JCM 2831 / NBRC 15690 / NCIMB 10815 / 0-1) protein is Trans-aconitate 2-methyltransferase.